Here is a 172-residue protein sequence, read N- to C-terminus: MAVSNMFVLGAAGINGGDILFQLVMFLILLALLQKFAFGPVMGIMKKREEHIAGEIDEAEKQNEEAKKLVEEQREILKQSRQEVQVMMENARKSAEDKKEEIVAAAREESERLKAAAKQEIEQQKDQAVAALREQVASLSVLIASKVIEKELSEQDQEKLIHEYIQEVGDVR.

The helical transmembrane segment at 13–33 threads the bilayer; that stretch reads GINGGDILFQLVMFLILLALL.

It belongs to the ATPase B chain family. As to quaternary structure, F-type ATPases have 2 components, F(1) - the catalytic core - and F(0) - the membrane proton channel. F(1) has five subunits: alpha(3), beta(3), gamma(1), delta(1), epsilon(1). F(0) has three main subunits: a(1), b(2) and c(10-14). The alpha and beta chains form an alternating ring which encloses part of the gamma chain. F(1) is attached to F(0) by a central stalk formed by the gamma and epsilon chains, while a peripheral stalk is formed by the delta and b chains.

It localises to the cell membrane. Its function is as follows. F(1)F(0) ATP synthase produces ATP from ADP in the presence of a proton or sodium gradient. F-type ATPases consist of two structural domains, F(1) containing the extramembraneous catalytic core and F(0) containing the membrane proton channel, linked together by a central stalk and a peripheral stalk. During catalysis, ATP synthesis in the catalytic domain of F(1) is coupled via a rotary mechanism of the central stalk subunits to proton translocation. Functionally, component of the F(0) channel, it forms part of the peripheral stalk, linking F(1) to F(0). This is ATP synthase subunit b from Priestia megaterium (strain ATCC 12872 / QMB1551) (Bacillus megaterium).